Reading from the N-terminus, the 479-residue chain is Ribosomal RNA small subunit methyltransferase F (479 aa).

Residues A125 to K131, E149, D176, and D194 each bind S-adenosyl-L-methionine. Residue C247 is the Nucleophile of the active site.

It belongs to the class I-like SAM-binding methyltransferase superfamily. RsmB/NOP family.

It localises to the cytoplasm. The catalysed reaction is cytidine(1407) in 16S rRNA + S-adenosyl-L-methionine = 5-methylcytidine(1407) in 16S rRNA + S-adenosyl-L-homocysteine + H(+). In terms of biological role, specifically methylates the cytosine at position 1407 (m5C1407) of 16S rRNA. This chain is Ribosomal RNA small subunit methyltransferase F, found in Escherichia coli O81 (strain ED1a).